We begin with the raw amino-acid sequence, 43 residues long: Metallothionein-2 (43 aa).

Met-1 is subject to Blocked amino end (Met).

The protein belongs to the metallothionein superfamily. Type 5 family.

Functionally, this protein binds cations of several transition elements. Thought to be involved in metal ion homeostasis. This is Metallothionein-2 (MtnB) from Drosophila melanogaster (Fruit fly).